Here is a 475-residue protein sequence, read N- to C-terminus: Glutamate--tRNA ligase 2 (475 aa).

The 'HIGH' region motif lies at Pro9–Ser19. The 'KMSKS' region signature appears at Lys238–Arg242. Lys241 contacts ATP.

It belongs to the class-I aminoacyl-tRNA synthetase family. Glutamate--tRNA ligase type 1 subfamily. Monomer.

The protein localises to the cytoplasm. The enzyme catalyses tRNA(Glu) + L-glutamate + ATP = L-glutamyl-tRNA(Glu) + AMP + diphosphate. Catalyzes the attachment of glutamate to tRNA(Glu) in a two-step reaction: glutamate is first activated by ATP to form Glu-AMP and then transferred to the acceptor end of tRNA(Glu). This Bartonella quintana (strain Toulouse) (Rochalimaea quintana) protein is Glutamate--tRNA ligase 2.